The following is a 279-amino-acid chain: DegV domain-containing protein SACOL1460 (279 aa).

The 275-residue stretch at 4 to 278 folds into the DegV domain; the sequence is QIIVTDSTSD…QGAIGLVVLK (275 aa). Hexadecanoate-binding residues include Thr-61 and Ser-93.

Its function is as follows. May bind long-chain fatty acids, such as palmitate, and may play a role in lipid transport or fatty acid metabolism. The polypeptide is DegV domain-containing protein SACOL1460 (Staphylococcus aureus (strain COL)).